The primary structure comprises 359 residues: Aminomethyltransferase (359 aa).

This sequence belongs to the GcvT family. As to quaternary structure, the glycine cleavage system is composed of four proteins: P, T, L and H.

The catalysed reaction is N(6)-[(R)-S(8)-aminomethyldihydrolipoyl]-L-lysyl-[protein] + (6S)-5,6,7,8-tetrahydrofolate = N(6)-[(R)-dihydrolipoyl]-L-lysyl-[protein] + (6R)-5,10-methylene-5,6,7,8-tetrahydrofolate + NH4(+). The glycine cleavage system catalyzes the degradation of glycine. The protein is Aminomethyltransferase of Pseudoalteromonas atlantica (strain T6c / ATCC BAA-1087).